Consider the following 811-residue polypeptide: MRFAQRPAMPERRSLPVLSLRDTVLFPGIATPITVGRLKTLRAVEAALRVEGEDKRIFAVAQRDAAEEPTASGLFSIGVIARITQVQRFGSGLQLVLYCERRAAAPRYTEVDGVIRAPVIELADLPLRPEEDGALEALSREVRERAVEYGRHRGAPEDVLKQFVGSMYGPAELVNHIAFYLDLPTPEKQALLEILSTEERMRSLALHLYRQIGIVETQEKIRTTVEEELGERQREIYLREQLRAIQKELGEEDDENAAARLEHKLQRANLPAEILQEARRDLARLRRMGRETSPEAQVLMTWLEWVADLPWSQRTDDHVDLDRARAILDEDHYGLGDVKDRVLEFLAVRKLRLEQARSEGERSRAISRGPILLFLGPPGTGKTSIAESIARALGRKYVRVSLGGARDEADIRGHRRTYVGAMPGRILQGIKRIGSKNPVIVLDEVDKLGASYQGDPGAALLEVLDPAQNDGFVDHYLGLPFDLSEVLFICTANFRETIPPPLFDRMEPALFAGYTEQEKHEIARKYLLPRQRKECGLREEQLRVTGTAIGGIISGYTREAGVRQLERTLGALARKAARRIAAGEIERAVVGADDDVKELLGRARMRLERRLQYDQPGVATGMYYTQMGGDIMHVEASVMPGKGDFVLTGQLGDVMKESGRAALSYARAHAAELGVPSDRLQRRDVHIHVPAGAVPKDGPSAGVTMAVALVSALSGRPVRSDIAMTGEITLRGTVLPIGGIKEKVLGAHRAGIFEILLPADNEADLDDLPAEVRSSLEFYLVNTLDEALARCLRLRSIRLEAPEEMPHARAS.

Positions 15–212 (LPVLSLRDTV…SLALHLYRQI (198 aa)) constitute a Lon N-terminal domain. 376–383 (GPPGTGKT) is a binding site for ATP. The Lon proteolytic domain maps to 613–794 (YDQPGVATGM…DEALARCLRL (182 aa)). Residues Ser-700 and Lys-743 contribute to the active site.

It belongs to the peptidase S16 family. As to quaternary structure, homohexamer. Organized in a ring with a central cavity.

Its subcellular location is the cytoplasm. It catalyses the reaction Hydrolysis of proteins in presence of ATP.. In terms of biological role, ATP-dependent serine protease that mediates the selective degradation of mutant and abnormal proteins as well as certain short-lived regulatory proteins. Required for cellular homeostasis and for survival from DNA damage and developmental changes induced by stress. Degrades polypeptides processively to yield small peptide fragments that are 5 to 10 amino acids long. Binds to DNA in a double-stranded, site-specific manner. The sequence is that of Lon protease 1 from Sorangium cellulosum (strain So ce56) (Polyangium cellulosum (strain So ce56)).